The sequence spans 548 residues: Glucose-6-phosphate isomerase (548 aa).

The Proton donor role is filled by Glu-355. Residues His-386 and Lys-514 contribute to the active site.

This sequence belongs to the GPI family.

The protein localises to the cytoplasm. The catalysed reaction is alpha-D-glucose 6-phosphate = beta-D-fructose 6-phosphate. It functions in the pathway carbohydrate biosynthesis; gluconeogenesis. Its pathway is carbohydrate degradation; glycolysis; D-glyceraldehyde 3-phosphate and glycerone phosphate from D-glucose: step 2/4. Catalyzes the reversible isomerization of glucose-6-phosphate to fructose-6-phosphate. The sequence is that of Glucose-6-phosphate isomerase from Hamiltonella defensa subsp. Acyrthosiphon pisum (strain 5AT).